The chain runs to 118 residues: uncharacterized protein (118 aa).

This sequence to E.coli YeaO.

This is an uncharacterized protein from Mycobacterium bovis (strain ATCC BAA-935 / AF2122/97).